The sequence spans 115 residues: Methylmalonyl-CoA decarboxylase subunit delta (115 aa).

A helical membrane pass occupies residues 11-31 (WLIMAINMTVVFAVLIALGIL). The tract at residues 46-70 (EAPAATAPVATPTATPVAPANASAQ) is disordered. The span at 48-65 (PAATAPVATPTATPVAPA) shows a compositional bias: low complexity.

The protein belongs to the OadG family. The methylmalonyl-CoA decarboxylase is composed of five subunits: the carboxyltransferase alpha subunit (MmdA), the tunnel beta subunit (MmdB), the biotin-containing gamma subunit (MmdC), and the delta (MmdD) and epsilon (MmdE) subunits. In terms of processing, the N-terminus is blocked.

The protein localises to the cell membrane. It catalyses the reaction (S)-methylmalonyl-CoA + Na(+)(in) + H(+)(out) = propanoyl-CoA + Na(+)(out) + CO2. Its activity is regulated as follows. Completely inhibited by avidin. Functionally, subunit of the sodium ion pump methylmalonyl-CoA decarboxylase, which converts the chemical energy of a decarboxylation reaction into an electrochemical gradient of Na(+) ions across the cytoplasmic membrane, thereby creating a sodium ion motive force that is used for ATP synthesis. The delta subunit is required for catalytic activity as well as for the proper assembly of the individual subunits to an enzyme complex. Can also convert malonyl-CoA into acetyl-CoA. This is Methylmalonyl-CoA decarboxylase subunit delta from Veillonella parvula (Staphylococcus parvulus).